The primary structure comprises 172 residues: Shikimate kinase (172 aa).

11–16 (GAGKST) lines the ATP pocket. S15 is a binding site for Mg(2+). Residues D33, R57, and G79 each coordinate substrate. R117 is a binding site for ATP. Position 136 (R136) interacts with substrate. An ATP-binding site is contributed by R153.

Belongs to the shikimate kinase family. Monomer. Mg(2+) is required as a cofactor.

Its subcellular location is the cytoplasm. It carries out the reaction shikimate + ATP = 3-phosphoshikimate + ADP + H(+). It functions in the pathway metabolic intermediate biosynthesis; chorismate biosynthesis; chorismate from D-erythrose 4-phosphate and phosphoenolpyruvate: step 5/7. Functionally, catalyzes the specific phosphorylation of the 3-hydroxyl group of shikimic acid using ATP as a cosubstrate. This chain is Shikimate kinase, found in Pseudomonas fluorescens (strain Pf0-1).